We begin with the raw amino-acid sequence, 66 residues long: Alpha-actitoxin-Ms11a-2 (66 aa).

A signal peptide spans 1 to 24; that stretch reads MASKIFFVLAVFLVMSAVLPESFA. 3 disulfides stabilise this stretch: C26–C41, C33–C46, and C40–C61.

It is found in the secreted. It localises to the nematocyst. Functionally, alpha-toxins act on postsynaptic membranes, they bind to the nicotinic acetylcholine receptors (nAChR) and thus inhibit them. This toxin competes with alpha-bungarotoxin for binding to orthosteric sites on muscle-type T.carlifornicus (IC(50)=1080 nM) and human alpha-7/CHRNA7 nAChRs (IC(50)=14.13 uM). The protein is Alpha-actitoxin-Ms11a-2 of Metridium senile (Brown sea anemone).